A 281-amino-acid chain; its full sequence is Ribosomal protein L11 methyltransferase (281 aa).

S-adenosyl-L-methionine is bound by residues T133, G154, D175, and N216.

This sequence belongs to the methyltransferase superfamily. PrmA family.

It localises to the cytoplasm. The enzyme catalyses L-lysyl-[protein] + 3 S-adenosyl-L-methionine = N(6),N(6),N(6)-trimethyl-L-lysyl-[protein] + 3 S-adenosyl-L-homocysteine + 3 H(+). In terms of biological role, methylates ribosomal protein L11. The chain is Ribosomal protein L11 methyltransferase from Campylobacter jejuni (strain RM1221).